A 63-amino-acid chain; its full sequence is SPbeta prophage-derived uncharacterized protein YomP (63 aa).

This chain is SPbeta prophage-derived uncharacterized protein YomP (yomP), found in Bacillus subtilis (strain 168).